Reading from the N-terminus, the 309-residue chain is Taste receptor type 2 member 45 (309 aa).

A topological domain (extracellular) is located at residue methionine 1. Residues 2–22 (ITFLPIIFSILVVVTFVIGNF) traverse the membrane as a helical segment. The Cytoplasmic portion of the chain corresponds to 23 to 55 (ANGFIALVNSTEWVKRQKISFADQIVTALAVSR). The helical transmembrane segment at 56–76 (VGLLWVLLLNWYSTVLNPAFY) threads the bilayer. The Extracellular portion of the chain corresponds to 77–98 (SVELRTTAYNIWAVTGHFSNWL). Residues 99–119 (ATSLSIFYLLKIANFSNLIFL) form a helical membrane-spanning segment. Topologically, residues 120-126 (HLKRRVK) are cytoplasmic. The chain crosses the membrane as a helical span at residues 127–147 (SVILVMLLGPLLFLACHLFVV). Residues 148-178 (NMNQIVWTKEYEGNMTWKIKLRRAMYLSDTT) lie on the Extracellular side of the membrane. A glycan (N-linked (GlcNAc...) asparagine) is linked at asparagine 161. The helical transmembrane segment at 179-199 (VTMLANLVPFTVTLISFLLLV) threads the bilayer. At 200 to 229 (CSLCEHLKKMQLHGKGSQDPSTKVHIKALQ) the chain is on the cytoplasmic side. The helical transmembrane segment at 230–250 (TVISFLLLCAIYFVSVIISVW) threads the bilayer. At 251-259 (SFKNLENKP) the chain is on the extracellular side. The helical transmembrane segment at 260 to 280 (VFMFCQAIGFSCSSAHPFILI) threads the bilayer. Residues 281–309 (WGNKKLKQPFLSVLWQMRYWVKGEKPSSS) are Cytoplasmic-facing.

Belongs to the G-protein coupled receptor T2R family.

It is found in the membrane. Its function is as follows. Receptor that may play a role in the perception of bitterness and is gustducin-linked. May play a role in sensing the chemical composition of the gastrointestinal content. The activity of this receptor may stimulate alpha gustducin, mediate PLC-beta-2 activation and lead to the gating of TRPM5. The sequence is that of Taste receptor type 2 member 45 (TAS2R45) from Pan paniscus (Pygmy chimpanzee).